The sequence spans 460 residues: MVRRRVLLATFPAQGHINPALQFAKRLLKAGTDVTFFTSVYAWRRMANTASAAAGNPPGLDFVAFSDGYDDGLKPCGDGKRYMSEMKARGSEALRNLLLNNHDVTFVVYSHLFAWAAEVARESQVPSALLWVEPATVLCIYYFYFNGYADEIDAGSDEIQLPRLPPLEQRSLPTFLLPETPERFRLMMKEKLETLDGEEKAKVLVNTFDALEPDALTAIDRYELIGIGPLIPSAFLDGGDPSETSYGGDLFEKSEENNCVEWLDTKPKSSVVYVSFGSVLRFPKAQMEEIGKGLLACGRPFLWMIREQKNDDGEEEEEELSCIGELKKMGKIVSWCSQLEVLAHPALGCFVTHCGWNSAVESLSCGVPVVAVPQWFDQTTNAKLIEDAWGTGVRVRMNEGGGVDGSEIERCVEMVMDGGEKSKLVRENAIKWKTLAREAMGEDGSSLKNLNAFLHQVARA.

An N-terminal signal peptide occupies residues 1–22 (MVRRRVLLATFPAQGHINPALQ). Residue H16 is the Proton acceptor of the active site. H16 is an an anthocyanidin binding site. The UDP-alpha-D-glucose site is built by Q338, H353, W356, N357, S358, E361, D377, and Q378.

It belongs to the UDP-glycosyltransferase family.

The catalysed reaction is an anthocyanidin 3-O-beta-D-glucoside + UDP-alpha-D-glucose = an anthocyanidin 3,5-di-O-beta-D-glucoside + UDP + 2 H(+). It functions in the pathway pigment biosynthesis; anthocyanin biosynthesis. Its function is as follows. Catalyzes the glucosylation at the O-5 position of anthocyanidin 3-glucosides to form anthocyanidin 3,5-di-O-glucosides using UDP-glucose as sugar donor. Anthocyanidin 3,5-di-O-glucosides are molecules that are responsible for pigmentation. Also acts on anthocyanidin 3-O-(6-O-malonylglucoside). Much less active with hydroxycinnamoylglucose derivatives. No activity in the absence of the 3-O-glucoside group. In Perilla frutescens (Beefsteak mint), this protein is Anthocyanidin 3-O-glucoside 5-O-glucosyltransferase 1 (PF3R4).